The following is a 382-amino-acid chain: uncharacterized protein (382 aa).

12 consecutive transmembrane segments (helical) span residues 14–34 (GLLL…LWLA), 45–65 (VVSS…GYVI), 75–95 (YLAS…IGFW), 102–122 (FVAG…LMCS), 131–151 (LLAA…LLVS), 157–177 (LMSV…PLLF), 206–226 (VNGC…MPLF), 235–255 (ASIG…QWPI), 270–290 (VQVF…AMAP), 291–311 (ALFI…AWAC), 325–345 (ALLL…AMLM), and 348–368 (FSDN…LLML).

Belongs to the major facilitator superfamily. YcaD (TC 2.A.1.26) family.

It is found in the cell inner membrane. This is an uncharacterized protein from Escherichia coli O17:K52:H18 (strain UMN026 / ExPEC).